Here is a 376-residue protein sequence, read N- to C-terminus: Phosphatidylinositol/phosphatidylcholine transfer protein SFH11 (376 aa).

Residues 1 to 20 show a composition bias toward basic and acidic residues; the sequence is MQETDRDIHISDGTMNKEEQ. Residues 1–24 are disordered; that stretch reads MQETDRDIHISDGTMNKEEQSPNN. One can recognise a CRAL-TRIO domain in the interval 92-266; that stretch reads EYGEVKKHYP…FLGGNCTCSD (175 aa). Positions 323-357 form a coiled coil; it reads MEKYAALKTAVKDSQKRIEMLEISLHETKKVLNGL.

This sequence belongs to the SFH family.

The protein resides in the golgi apparatus membrane. Its subcellular location is the cell membrane. Its function is as follows. Required for transport of secretory proteins from the Golgi complex. Catalyzes the transfer of phosphatidylinositol and phosphatidylcholine between membranes in vitro. This is Phosphatidylinositol/phosphatidylcholine transfer protein SFH11 (SFH11) from Arabidopsis thaliana (Mouse-ear cress).